Consider the following 452-residue polypeptide: Tripartite motif-containing protein 49D (452 aa).

The segment at 15–56 (CPICLNYFIDPVTIDCGHSFCRPCFYLNWQDIPILTQCFECL) adopts an RING-type zinc-finger fold. The B box-type zinc finger occupies 88-129 (SEEQMCGTHRETKKIFCEVDRSLLCLLCSSSLEHRYHRHCPA). Zn(2+) is bound by residues Cys93, His96, Cys115, and His121. Residues 269-452 (ELRAGPITGL…LRPIFCCVHL (184 aa)) form the B30.2/SPRY domain.

Belongs to the TRIM/RBCC family.

The protein is Tripartite motif-containing protein 49D of Homo sapiens (Human).